We begin with the raw amino-acid sequence, 358 residues long: Isopentenyl-diphosphate delta-isomerase (358 aa).

Substrate is bound at residue 12-13; sequence RK. FMN contacts are provided by residues 69–71, Ser99, and Asn128; that span reads AMT. Residue Gln158 coordinates substrate. Glu159 contributes to the Mg(2+) binding site. Residues Lys190, Thr220, 267–269, and 288–289 each bind FMN; these read GIR and AG.

This sequence belongs to the IPP isomerase type 2 family. In terms of assembly, homooctamer. Dimer of tetramers. The cofactor is FMN. NADPH serves as cofactor. Requires Mg(2+) as cofactor.

The protein localises to the cytoplasm. It catalyses the reaction isopentenyl diphosphate = dimethylallyl diphosphate. Functionally, involved in the biosynthesis of isoprenoids. Catalyzes the 1,3-allylic rearrangement of the homoallylic substrate isopentenyl (IPP) to its allylic isomer, dimethylallyl diphosphate (DMAPP). This is Isopentenyl-diphosphate delta-isomerase from Listeria monocytogenes serotype 4b (strain F2365).